The sequence spans 1947 residues: Sodium channel protein type 3 subunit alpha (1947 aa).

Topologically, residues 1-128 (MAQALLVPPG…KIAIKILVHS (128 aa)) are cytoplasmic. The disordered stretch occupies residues 28–60 (RAAEEKAKKPKKEQDIDDENKPKPNSDLEAGKN). Residues 46 to 57 (ENKPKPNSDLEA) are compositionally biased toward basic and acidic residues. The stretch at 110 to 455 (ILTPLNPVRK…QQMLEQLKKQ (346 aa)) is one I repeat. The chain crosses the membrane as a helical span at residues 129–146 (LFSMLIMCTILTNCVFMT). The Extracellular portion of the chain corresponds to 147 to 152 (LSNPPD). Residues 153 to 174 (WTKNVEYTFTGIYTFESLIKIL) form a helical membrane-spanning segment. The Cytoplasmic portion of the chain corresponds to 175 to 188 (ARGFCLEDFTFLRD). A helical membrane pass occupies residues 189 to 206 (PWNWLDFSVIVMAYVTEF). Topologically, residues 207–213 (VDLGNVS) are extracellular. N-linked (GlcNAc...) asparagine glycosylation occurs at Asn-211. The chain crosses the membrane as a helical span at residues 214–235 (ALRTFRVLRALKTISVIPGLKT). Over 236-249 (IVGALIQSVKKLSD) the chain is Cytoplasmic. The helical transmembrane segment at 250–269 (VMILTVFCLSVFALIGLQLF) threads the bilayer. Residues 270–369 (MGNLRNKCLQ…NYGYTSFDTF (100 aa)) are Extracellular-facing. Asn-290, Asn-296, Asn-302, Asn-307, and Asn-339 each carry an N-linked (GlcNAc...) asparagine glycan. Positions 370–386 (SWAFLSLFRLMTQDYWE) form an intramembrane region, pore-forming. The Extracellular segment spans residues 387–397 (NLYQLTLRAAG). Residues 398–424 (KTYMIFFVLVIFLGSFYLVNLILAVVA) form a helical membrane-spanning segment. Residues 425–712 (MAYEEQNQAT…LVNLIVMDPF (288 aa)) are Cytoplasmic-facing. Ser-484, Ser-485, and Ser-486 each carry phosphoserine. Disordered regions lie at residues 493-529 (SKSA…SESE) and 587-632 (VGSE…ETEV). The span at 500–509 (RNRRKKRRQR) shows a compositional bias: basic residues. Basic and acidic residues-rich tracts occupy residues 510-529 (EHLE…SESE) and 596-622 (DEHS…ERRN). The stretch at 693–965 (CCDSWLKVKH…QIAVGRMQKG (273 aa)) is one II repeat. A helical membrane pass occupies residues 713 to 730 (VDLAITICIVLNTLFMAM). The Extracellular portion of the chain corresponds to 731-738 (EHYPMTEQ). The helical transmembrane segment at 739 to 763 (FSSVLTVGNLVFTGIFTAEMVLKII) threads the bilayer. Over 764-773 (AMDPYYYFQE) the chain is Cytoplasmic. The chain crosses the membrane as a helical span at residues 774–793 (GWNIFDGIIVSLSLMELGLA). The Extracellular portion of the chain corresponds to 794-797 (NVEG). A helical transmembrane segment spans residues 798–816 (LSVLRSFRLLRVFKLAKSW). Over 817 to 834 (PTLNMLIKIIGNSVGALG) the chain is Cytoplasmic. Residues 835–855 (NLTLVLAIIVFIFAVVGMQLF) form a helical membrane-spanning segment. Topologically, residues 856-880 (GKSYKECVCKINEDCKLPRWHMNDF) are extracellular. A disulfide bridge connects residues Cys-864 and Cys-870. Residues 881–896 (FHSFLIVFRVLCGEWI) constitute an intramembrane region (pore-forming). Residues 897-907 (ETMWDCMEVAG) are Extracellular-facing. Cys-902 and Cys-911 form a disulfide bridge. The chain crosses the membrane as a helical span at residues 908-934 (QTMCLIVFMLVMVIGNLVVLNLFLALL). Residues 935–1157 (LSSFSSDNLA…RKTCYSIVEH (223 aa)) lie on the Cytoplasmic side of the membrane. Residues 1070–1113 (EEFSSESELEESKEKLNATSSSEGSTVDVAPPREGEQAEIEPEE) form a disordered region. The III repeat unit spans residues 1140 to 1451 (KGKIWWNLRK…KKYYNAMKKL (312 aa)). The helical transmembrane segment at 1158-1178 (NWFETFIVFMILLSSGALAFE) threads the bilayer. Residues 1179–1190 (DIYIEQRKTIKT) lie on the Extracellular side of the membrane. Residues 1191–1212 (MLEYADKVFTYIFILEMLLKWV) form a helical membrane-spanning segment. At 1213 to 1218 (AYGFQT) the chain is on the cytoplasmic side. Residues 1219 to 1244 (YFTNAWCWLDFLIVDVSLVSLVANAL) form a helical membrane-spanning segment. Over 1245–1253 (GYSELGAIK) the chain is Extracellular. The helical transmembrane segment at 1254-1272 (SLRTLRALRPLRALSRFEG) threads the bilayer. The Cytoplasmic segment spans residues 1273–1285 (MRVVVNALVGAIP). A helical membrane pass occupies residues 1286–1308 (SIMNVLLVCLIFWLIFSIMGVNL). Over 1309–1354 (FAGKFYHCVNMTTGSMFDMSEVNNFSDCQALGKQARWKNVKVNFDN) the chain is Extracellular. An intrachain disulfide couples Cys-1316 to Cys-1336. N-linked (GlcNAc...) asparagine glycans are attached at residues Asn-1318 and Asn-1332. Positions 1355–1371 (VGAGYLALLQVATFKGW) form an intramembrane region, pore-forming. The Extracellular segment spans residues 1372–1394 (MDIMYAAVDSRDVKLQPVYEENL). Residues 1395–1420 (YMYLYFVIFIIFGSFFTLNLFIGVII) traverse the membrane as a helical segment. Topologically, residues 1421–1478 (DNFNQQKKKFGGQDIFMTEEQKKYYNAMKKLGSKKPQKPIPRPANKFQGMVFDFVTRQ) are cytoplasmic. Ser-1453 carries the phosphoserine modification. The IV repeat unit spans residues 1460 to 1758 (IPRPANKFQG…WEKFDPDATQ (299 aa)). Residues 1479–1497 (VFDISIMILICLNMVTMMV) traverse the membrane as a helical segment. The Extracellular portion of the chain corresponds to 1498–1505 (ETDDQSKY). The helical transmembrane segment at 1506–1529 (MTLVLSRINLVFIVLFTGEFLLKL) threads the bilayer. Residues 1530–1539 (ISLRYYYFTI) lie on the Cytoplasmic side of the membrane. Residues 1540 to 1557 (GWNIFDFVVVILSIVGMF) form a helical membrane-spanning segment. The Extracellular portion of the chain corresponds to 1558–1569 (LAELIEKYFVSP). The chain crosses the membrane as a helical span at residues 1570 to 1592 (TLFRVIRLARIGRILRLIKGAKG). At 1593–1605 (IRTLLFALMMSLP) the chain is on the cytoplasmic side. A helical membrane pass occupies residues 1606 to 1629 (ALFNIGLLLFLVMFIYAIFGMSNF). At 1630–1651 (AYVKKEAGIDDMFNFETFGNSM) the chain is on the extracellular side. An intramembrane region (pore-forming) is located at residues 1652-1664 (ICLFQITTSAGWD). Over 1665 to 1696 (GLLAPILNSAPPDCDPDAIHPGSSVKGDCGNP) the chain is Extracellular. A helical membrane pass occupies residues 1697 to 1722 (SVGIFFFVSYIIISFLVVVNMYIAVI). Residues 1723 to 1947 (LENFSVATEE…PEKESKGKEV (225 aa)) are Cytoplasmic-facing. The IQ domain occupies 1852–1881 (EEVSAAIIQRNYRCYLLKQRLKNISNTYDK). The disordered stretch occupies residues 1901–1947 (LNGNSTPEKTDGSSSTTSPPSYDSVTKPDKEKFEKDKPEKESKGKEV). Positions 1926 to 1947 (TKPDKEKFEKDKPEKESKGKEV) are enriched in basic and acidic residues.

This sequence belongs to the sodium channel (TC 1.A.1.10) family. Nav1.3/SCN3A subfamily. In terms of assembly, heterooligomer of an alpha subunit, SCN3A, and 1 to 3 regulatory beta subunits including SCN1B and SCN2B; disulfide-linked with some beta subunits like SCN2B. Interacts with NEDD4L; could regulate expression of SCN3A at the plasma membrane through ubiquitination-regulated endocytosis. In terms of processing, may be ubiquitinated by NEDD4L; which would promote its endocytosis. Phosphorylation at Ser-1453 in a highly conserved cytoplasmic loop slows inactivation of the channel and reduces peak sodium currents. Expressed in enterochromaffin cells in both colon and small bowel (at protein level). Expressed in pancreatic alpha and beta cells.

Its subcellular location is the cell membrane. The protein resides in the basal cell membrane. The enzyme catalyses Na(+)(in) = Na(+)(out). In terms of biological role, pore-forming subunit of Nav1.3, a voltage-gated sodium (Nav) channel that directly mediates the depolarizing phase of action potentials in excitable membranes. Navs, also called VGSCs (voltage-gated sodium channels) or VDSCs (voltage-dependent sodium channels), operate by switching between closed and open conformations depending on the voltage difference across the membrane. In the open conformation they allow Na(+) ions to selectively pass through the pore, along their electrochemical gradient. The influx of Na+ ions provokes membrane depolarization, initiating the propagation of electrical signals throughout cells and tissues. In some secretory cell types, it also participates in cell excitability through membrane depolarization and regulates cells responsiveness to stimuli triggering secretion. For instance, it controls the release of serotonin/5-hydroxytryptamine by enterochromaffin cells and is required for both glucagon- and glucose-induced insulin secretion in pancreatic endocrine cells. This Mus musculus (Mouse) protein is Sodium channel protein type 3 subunit alpha.